Reading from the N-terminus, the 241-residue chain is Major microneme antigen (241 aa).

The N-terminal stretch at 1–34 is a signal peptide; it reads MTLPIHFPRCVLYGMASAVWSILFLHILVGDTMS. A propeptide spanning residues 35–103 is cleaved from the precursor; that stretch reads AADALSWSGG…ATGRGPSFVH (69 aa). Over residues 64-83 the composition is skewed to basic and acidic residues; it reads GKELEQQHGGEEQQMQRDTK. Positions 64–90 are disordered; it reads GKELEQQHGGEEQQMQRDTKPAAFSNP. PAN domains lie at 112–181 and 185–241; these read CFPH…PRSC and CTDN…VERA. Disulfide bonds link cysteine 112–cysteine 181, cysteine 137–cysteine 159, cysteine 141–cysteine 147, cysteine 185–cysteine 189, cysteine 210–cysteine 230, and cysteine 214–cysteine 220. A carbohydrate is bound at residue serine 121. Residues lysine 162, tyrosine 169, and aspartate 174 each contribute to the a carbohydrate site.

The protein belongs to the microneme antigen family. Homodimer or heterodimer of major microneme antigen and microneme antigen. Post-translationally, contains six disulfide bonds.

The protein localises to the cytoplasmic vesicle. The protein resides in the secretory vesicle. It localises to the microneme. In terms of biological role, galactose-binding lectin. Plays a role in adhesion to the host cell. Has a potential role in invasion of host cells. This Sarcocystis muris protein is Major microneme antigen.